Consider the following 238-residue polypeptide: MATLKASFLIKTLDSDVTGDFLSDLERRGSGAVHVIMGPMFSGKSTSLLRRIKSEISDGRSVAMLKSSKDTRYAKDSVVTHDGIGFPCWALPDLMSFPEKFGLDAYNKLDVIGIDEAQFFGDLYEFCCKVADDDGKIVIVAGLDGDYLRRSFGAVLDIIPIADSVTKLTARCEVCGHKAFFTLRKNCDTRTELIGGADVYMPVCRKHYITNHIVIKASKKVLEDSDKARAESCVAATI.

ATP contacts are provided by residues 38 to 45, 70 to 72, and 115 to 118; these read GPMFSGKS, DTR, and DEAQ. The Proton acceptor role is filled by Glu116. Residue Tyr147 participates in substrate binding. Residues Cys172 and Cys175 each contribute to the Zn(2+) site. Residues 191-195 and Tyr200 contribute to the substrate site; that span reads TELIG. Cys204 is a binding site for Zn(2+).

The protein belongs to the thymidine kinase family. In terms of assembly, monomer and dimer. Dimerization is stimulated by ATP. In terms of tissue distribution, expressed ubiquitously.

Its subcellular location is the cytoplasm. The catalysed reaction is thymidine + ATP = dTMP + ADP + H(+). The protein operates within purine metabolism. It participates in pyrimidine metabolism. In terms of biological role, part of the salvage pathway for purine and pyrimidine deoxyribonucleotide synthesis. Phosphorylates preferentially purines over pyrimidines. Mediates tolerance to genotoxins, such as ultraviolet-C (UV-C) irradiation, MMC, a DNA crosslinker, and ZEO, a DNA intercalator, that induce double-strand breaks and thus contributes to several DNA repair pathways by providing deoxythymidine triphosphate that serve as precursors for DNA repair and to balance deoxyribonucleotides pools. The chain is Thymidine kinase a from Arabidopsis thaliana (Mouse-ear cress).